The primary structure comprises 149 residues: Large ribosomal subunit protein bL9 (149 aa).

This sequence belongs to the bacterial ribosomal protein bL9 family.

In terms of biological role, binds to the 23S rRNA. This Ligilactobacillus salivarius (strain UCC118) (Lactobacillus salivarius) protein is Large ribosomal subunit protein bL9.